Reading from the N-terminus, the 205-residue chain is Probable GTP-binding protein EngB (205 aa).

The region spanning 29 to 203 (QGAEIAFIGR…KAVLSQWFRS (175 aa)) is the EngB-type G domain. Residues 37-44 (GRSNAGKS), 64-68 (GRTQM), 82-85 (DLPG), 149-152 (TKSD), and 182-184 (FSS) each bind GTP. Mg(2+)-binding residues include serine 44 and threonine 66.

The protein belongs to the TRAFAC class TrmE-Era-EngA-EngB-Septin-like GTPase superfamily. EngB GTPase family. Requires Mg(2+) as cofactor.

Functionally, necessary for normal cell division and for the maintenance of normal septation. In Coxiella burnetii (strain CbuG_Q212) (Coxiella burnetii (strain Q212)), this protein is Probable GTP-binding protein EngB.